The following is a 414-amino-acid chain: Serine/threonine transporter SstT (414 aa).

8 helical membrane-spanning segments follow: residues 16–36, 46–66, 84–104, 143–163, 180–200, 219–239, 300–320, and 332–352; these read GSLVKQILVGLVLGILLAWIS, LGTLFVGALKAVAPVLVLMLV, ILFLYLLGTFSAALAAVVFSF, ALLNANYIGILVWAVGLGFAL, AVTFMVKLVIRFAPVGIFGLV, LVVLIGCMLLVALVVNPLLVF, MAGAAITITVLTLAAVHTLGV, and VVASLCACGASGVAGGSLLLI.

This sequence belongs to the dicarboxylate/amino acid:cation symporter (DAACS) (TC 2.A.23) family.

It is found in the cell inner membrane. It catalyses the reaction L-serine(in) + Na(+)(in) = L-serine(out) + Na(+)(out). The catalysed reaction is L-threonine(in) + Na(+)(in) = L-threonine(out) + Na(+)(out). Functionally, involved in the import of serine and threonine into the cell, with the concomitant import of sodium (symport system). The protein is Serine/threonine transporter SstT of Salmonella newport (strain SL254).